The following is a 180-amino-acid chain: MAEVDLCALFFNLRVKDVTSSDELKKHILSASDERNPLTEPGENQSMDVDEEGGTRDPGILYLYVDCPTMMQCFYGTSFPYNSRHGALLTNLPPYQKDVSLSEVSRGLRQASGFFGYEDPIRSAYFAALSFPGHVAKLDEQMELTSTNGESLTFDLYASDQLRLEPGAWVRHGECKFGMN.

The interval 31 to 54 is disordered; that stretch reads ASDERNPLTEPGENQSMDVDEEGG.

Its function is as follows. Hydrolyzes cytokinin glucosides thus liberating free cytokinins. The chain is Cytokinin-beta-glucosidase (ROLC) from Nicotiana glauca (Glaucous tobacco).